The chain runs to 824 residues: Serine/threonine-protein kinase SCH9 (824 aa).

The span at 1-23 (MMNFFTSKSSNQDTGFSSQHQHP) shows a compositional bias: polar residues. Disordered regions lie at residues 1-37 (MMNF…STAG), 125-152 (NAGN…SSTT), 221-272 (ESLG…SQLP), and 285-327 (THRS…SHPI). The span at 24–37 (NGQNNGNNNSSTAG) shows a compositional bias: low complexity. The C2 domain occupies 166-378 (QREAAAAAYG…LAHASQHQWH (213 aa)). Positions 226-248 (INNNNNNNNNNQHNQNQHINNNN) are enriched in low complexity. Polar residues-rich tracts occupy residues 249-272 (ENTN…SQLP) and 286-302 (HRSS…SSVT). Low complexity predominate over residues 307–321 (RSSNSSSGSSNGPKN). Positions 412-671 (FEVLRLLGKG…GRELRAHPFF (260 aa)) constitute a Protein kinase domain. ATP-binding positions include 418–426 (LGKGTFGQV) and Lys441. Asp538 (proton acceptor) is an active-site residue. Position 570 is a phosphothreonine; by PKH1 or PKH2 (Thr570). The AGC-kinase C-terminal domain maps to 672-748 (ADIDWEALKQ…VDESAIDEHV (77 aa)). A Phosphoserine; by TORC1 modification is found at Ser711. Thr723 carries the phosphothreonine; by TORC1 modification. Ser726 carries the phosphoserine; by TORC1 modification. At Thr737 the chain carries Phosphothreonine; by TORC1. Ser758 and Ser765 each carry phosphoserine; by TORC1.

Belongs to the protein kinase superfamily. AGC Ser/Thr protein kinase family. cAMP subfamily. Phosphorylated by TORC1 in nutrient-replete conditions and during mechanical stress.

It catalyses the reaction L-seryl-[protein] + ATP = O-phospho-L-seryl-[protein] + ADP + H(+). The catalysed reaction is L-threonyl-[protein] + ATP = O-phospho-L-threonyl-[protein] + ADP + H(+). With respect to regulation, activated by cAMP. Protein kinase that is part of growth control pathway which is at least partially redundant with the cAMP pathway. Regulates both BCY1 phosphorylation and MPK1 activity. Regulates ribosome biogenesis, translation initiation, and entry into stationary phase in a TORC1-dependent manner. This is Serine/threonine-protein kinase SCH9 (SCH9) from Saccharomyces cerevisiae (strain ATCC 204508 / S288c) (Baker's yeast).